We begin with the raw amino-acid sequence, 347 residues long: CRISPR-associated endonuclease Cas1 4 (347 aa).

The span at 1 to 21 (MNIENEVHIENASESKREPKP) shows a compositional bias: basic and acidic residues. Residues 1–25 (MNIENEVHIENASESKREPKPPEGL) are disordered. Residues Glu-176, His-241, and Glu-256 each coordinate Mn(2+).

It belongs to the CRISPR-associated endonuclease Cas1 family. Homodimer, forms a heterotetramer with a Cas2 homodimer. Requires Mg(2+) as cofactor. The cofactor is Mn(2+).

CRISPR (clustered regularly interspaced short palindromic repeat), is an adaptive immune system that provides protection against mobile genetic elements (viruses, transposable elements and conjugative plasmids). CRISPR clusters contain spacers, sequences complementary to antecedent mobile elements, and target invading nucleic acids. CRISPR clusters are transcribed and processed into CRISPR RNA (crRNA). Acts as a dsDNA endonuclease. Involved in the integration of spacer DNA into the CRISPR cassette. The protein is CRISPR-associated endonuclease Cas1 4 of Methanospirillum hungatei JF-1 (strain ATCC 27890 / DSM 864 / NBRC 100397 / JF-1).